The sequence spans 757 residues: Endonuclease MutS2 (757 aa).

Residue glycine 321 to threonine 328 participates in ATP binding. Residues isoleucine 681 to lysine 756 enclose the Smr domain.

This sequence belongs to the DNA mismatch repair MutS family. MutS2 subfamily. In terms of assembly, homodimer. Binds to stalled ribosomes, contacting rRNA.

In terms of biological role, endonuclease that is involved in the suppression of homologous recombination and thus may have a key role in the control of bacterial genetic diversity. Acts as a ribosome collision sensor, splitting the ribosome into its 2 subunits. Detects stalled/collided 70S ribosomes which it binds and splits by an ATP-hydrolysis driven conformational change. Acts upstream of the ribosome quality control system (RQC), a ribosome-associated complex that mediates the extraction of incompletely synthesized nascent chains from stalled ribosomes and their subsequent degradation. Probably generates substrates for RQC. In Thermotoga petrophila (strain ATCC BAA-488 / DSM 13995 / JCM 10881 / RKU-1), this protein is Endonuclease MutS2.